The chain runs to 283 residues: Formamidopyrimidine-DNA glycosylase (283 aa).

The active-site Schiff-base intermediate with DNA is Pro-2. Glu-3 functions as the Proton donor in the catalytic mechanism. Lys-58 acts as the Proton donor; for beta-elimination activity in catalysis. His-100, Arg-119, and Arg-162 together coordinate DNA. The FPG-type zinc-finger motif lies at 247–283 (DVYGREGEPCRRAGCDGTVQRITQSGRSSFYCAQCQR). Arg-273 serves as the catalytic Proton donor; for delta-elimination activity.

This sequence belongs to the FPG family. Monomer. Requires Zn(2+) as cofactor.

It carries out the reaction Hydrolysis of DNA containing ring-opened 7-methylguanine residues, releasing 2,6-diamino-4-hydroxy-5-(N-methyl)formamidopyrimidine.. The enzyme catalyses 2'-deoxyribonucleotide-(2'-deoxyribose 5'-phosphate)-2'-deoxyribonucleotide-DNA = a 3'-end 2'-deoxyribonucleotide-(2,3-dehydro-2,3-deoxyribose 5'-phosphate)-DNA + a 5'-end 5'-phospho-2'-deoxyribonucleoside-DNA + H(+). Involved in base excision repair of DNA damaged by oxidation or by mutagenic agents. Acts as a DNA glycosylase that recognizes and removes damaged bases. Has a preference for oxidized purines, such as 7,8-dihydro-8-oxoguanine (8-oxoG). Has AP (apurinic/apyrimidinic) lyase activity and introduces nicks in the DNA strand. Cleaves the DNA backbone by beta-delta elimination to generate a single-strand break at the site of the removed base with both 3'- and 5'-phosphates. This Ruegeria pomeroyi (strain ATCC 700808 / DSM 15171 / DSS-3) (Silicibacter pomeroyi) protein is Formamidopyrimidine-DNA glycosylase.